We begin with the raw amino-acid sequence, 485 residues long: Glutamyl-tRNA(Gln) amidotransferase subunit A (485 aa).

Catalysis depends on charge relay system residues lysine 76 and serine 155. Serine 179 serves as the catalytic Acyl-ester intermediate.

The protein belongs to the amidase family. GatA subfamily. In terms of assembly, heterotrimer of A, B and C subunits.

The enzyme catalyses L-glutamyl-tRNA(Gln) + L-glutamine + ATP + H2O = L-glutaminyl-tRNA(Gln) + L-glutamate + ADP + phosphate + H(+). Functionally, allows the formation of correctly charged Gln-tRNA(Gln) through the transamidation of misacylated Glu-tRNA(Gln) in organisms which lack glutaminyl-tRNA synthetase. The reaction takes place in the presence of glutamine and ATP through an activated gamma-phospho-Glu-tRNA(Gln). The chain is Glutamyl-tRNA(Gln) amidotransferase subunit A from Marinobacter nauticus (strain ATCC 700491 / DSM 11845 / VT8) (Marinobacter aquaeolei).